An 86-amino-acid chain; its full sequence is U-actitoxin-Avd10a (86 aa).

A signal peptide spans 1–20 (MSRIAILLFVAFLLVAGISA). The propeptide occupies 21 to 42 (KSTAHFKKNVLADLFKERRFNA). Positions 51–86 (CVNIDVDSFCDGMAERGACNIIPQMATNCAKACNSC) constitute a ShKT domain. Intrachain disulfides connect C51/C86, C60/C79, and C69/C83.

The protein belongs to the sea anemone type 1 potassium channel toxin family. Type 1b subfamily.

Its subcellular location is the secreted. It is found in the nematocyst. Functionally, inhibits voltage-gated potassium channels (Kv1/KCNA). This Anemonia viridis (Snakelocks anemone) protein is U-actitoxin-Avd10a.